The sequence spans 796 residues: Histone acetyltransferase KAT2B (796 aa).

Disordered regions lie at residues 1–32, 77–97, and 371–408; these read MSES…TECS, WKSQ…AEQP, and AGGG…DSKR. A compositionally biased stretch (low complexity) spans 10–24; the sequence is GSPAVGAAGSAPAAP. Positions 81–94 are enriched in pro residues; it reads NPPPTPPPPTPPRA. Residues 392–408 show a composition bias toward basic and acidic residues; the sequence is GEKRKPAEPLSHEDSKR. In terms of domain architecture, N-acetyltransferase spans 469–617; sequence LNQKPNKKIL…GATLMGCELN (149 aa). The active-site Proton donor/acceptor is the Glu-536. Acetyl-CoA-binding positions include 540–542, 547–553, and 578–581; these read CAV, QVKGYGT, and YAIG. Positions 687-791 constitute a Bromo domain; that stretch reads KDPDQLYSTL…KFFYTKIKEA (105 aa).

The protein belongs to the acetyltransferase family. GCN5 subfamily.

It is found in the nucleus. The protein localises to the cytoplasm. Its subcellular location is the cytoskeleton. It localises to the microtubule organizing center. The protein resides in the centrosome. The catalysed reaction is L-lysyl-[histone] + acetyl-CoA = N(6)-acetyl-L-lysyl-[histone] + CoA + H(+). It carries out the reaction L-lysyl-[protein] + acetyl-CoA = N(6)-acetyl-L-lysyl-[protein] + CoA + H(+). The enzyme catalyses spermidine + acetyl-CoA = N(8)-acetylspermidine + CoA + H(+). In terms of biological role, functions as a histone acetyltransferase (HAT) to promote transcriptional activation. Has significant histone acetyltransferase activity with core histones (H3 and H4), and also with nucleosome core particles. Has a a strong preference for acetylation of H3 at 'Lys-9' (H3K9ac). Also acetylates non-histone proteins. Involved in heart and limb development by mediating acetylation of tbx5. Also acetylates spermidine. Together with kat2a, required for growth and differentiation of craniofacial cartilage and bone by regulating acetylation of histone H3 at 'Lys-9' (H3K9ac). The sequence is that of Histone acetyltransferase KAT2B from Danio rerio (Zebrafish).